The chain runs to 214 residues: MARIVVLISGSGSNLQALIDAQKQGQLGEDAHIVSVISSSKKAYGLTRAADNNIPTKVCSLYPYTKGIAKEDKAARAKARSQFENDLAKLVLEEKPDVIICAGWLLILGSTFLSQLQSVPILNLHPALPGCFDGTTHAIEMAWRKCQDENKPLTAGCMVHYVIEEVDKGEPLVVKKLEIIPGEETLEQYEQRVHDAEHIAIVEATYKVLQQLHK.

Position 12-14 (12-14 (GSN)) interacts with N(1)-(5-phospho-beta-D-ribosyl)glycinamide. Residues 105-108 (LLIL) and Asn123 contribute to the (6R)-10-formyltetrahydrofolate site. The Proton donor role is filled by His125. A (6R)-10-formyltetrahydrofolate-binding site is contributed by Asp167. Glu197 contributes to the N(1)-(5-phospho-beta-D-ribosyl)glycinamide binding site.

Belongs to the GART family.

It catalyses the reaction N(1)-(5-phospho-beta-D-ribosyl)glycinamide + (6R)-10-formyltetrahydrofolate = N(2)-formyl-N(1)-(5-phospho-beta-D-ribosyl)glycinamide + (6S)-5,6,7,8-tetrahydrofolate + H(+). It functions in the pathway purine metabolism; IMP biosynthesis via de novo pathway; N(2)-formyl-N(1)-(5-phospho-D-ribosyl)glycinamide from N(1)-(5-phospho-D-ribosyl)glycinamide (10-formyl THF route): step 1/1. The protein is Phosphoribosylglycinamide formyltransferase of Saccharomyces cerevisiae (strain ATCC 204508 / S288c) (Baker's yeast).